Here is a 250-residue protein sequence, read N- to C-terminus: Triosephosphate isomerase (250 aa).

8–10 (NWK) provides a ligand contact to substrate. H93 functions as the Electrophile in the catalytic mechanism. Residue E165 is the Proton acceptor of the active site. 2 residues coordinate substrate: G171 and S211.

This sequence belongs to the triosephosphate isomerase family. As to quaternary structure, homodimer.

The protein resides in the cytoplasm. It catalyses the reaction D-glyceraldehyde 3-phosphate = dihydroxyacetone phosphate. The protein operates within carbohydrate biosynthesis; gluconeogenesis. It functions in the pathway carbohydrate degradation; glycolysis; D-glyceraldehyde 3-phosphate from glycerone phosphate: step 1/1. In terms of biological role, involved in the gluconeogenesis. Catalyzes stereospecifically the conversion of dihydroxyacetone phosphate (DHAP) to D-glyceraldehyde-3-phosphate (G3P). This Malacoplasma penetrans (strain HF-2) (Mycoplasma penetrans) protein is Triosephosphate isomerase.